We begin with the raw amino-acid sequence, 418 residues long: Gamma-glutamyl phosphate reductase (418 aa).

Belongs to the gamma-glutamyl phosphate reductase family.

The protein localises to the cytoplasm. It carries out the reaction L-glutamate 5-semialdehyde + phosphate + NADP(+) = L-glutamyl 5-phosphate + NADPH + H(+). Its pathway is amino-acid biosynthesis; L-proline biosynthesis; L-glutamate 5-semialdehyde from L-glutamate: step 2/2. Functionally, catalyzes the NADPH-dependent reduction of L-glutamate 5-phosphate into L-glutamate 5-semialdehyde and phosphate. The product spontaneously undergoes cyclization to form 1-pyrroline-5-carboxylate. In Geobacter sulfurreducens (strain ATCC 51573 / DSM 12127 / PCA), this protein is Gamma-glutamyl phosphate reductase.